Reading from the N-terminus, the 64-residue chain is Toxin Tce3 (64 aa).

The region spanning 1 to 62 (KDGYIIEHRG…IFDSNNNKCS (62 aa)) is the LCN-type CS-alpha/beta domain. Cystine bridges form between cysteine 11-cysteine 61, cysteine 15-cysteine 37, cysteine 23-cysteine 42, and cysteine 27-cysteine 44.

The protein belongs to the long (4 C-C) scorpion toxin superfamily. Sodium channel inhibitor family. Beta subfamily. As to expression, expressed by the venom gland.

Its subcellular location is the secreted. Its function is as follows. Inhibits the sodium (Nav) currents in an apparent irreversible manner. Produces small depolarization and induces repetitive firing in squid axons. Is specific for arthropods (crickets, triatomides, crabs and squids), but is non-toxic to mice. Shows antibacterial activity against both Gram-positive and Gram-negative bacteria. The chain is Toxin Tce3 from Tityus cerroazul (Scorpion).